Here is a 492-residue protein sequence, read N- to C-terminus: 2-succinylbenzoate--CoA ligase (492 aa).

The protein belongs to the ATP-dependent AMP-binding enzyme family. MenE subfamily.

The catalysed reaction is 2-succinylbenzoate + ATP + CoA = 2-succinylbenzoyl-CoA + AMP + diphosphate. Its pathway is quinol/quinone metabolism; 1,4-dihydroxy-2-naphthoate biosynthesis; 1,4-dihydroxy-2-naphthoate from chorismate: step 5/7. The protein operates within quinol/quinone metabolism; menaquinone biosynthesis. Its function is as follows. Converts 2-succinylbenzoate (OSB) to 2-succinylbenzoyl-CoA (OSB-CoA). In Staphylococcus aureus (strain bovine RF122 / ET3-1), this protein is 2-succinylbenzoate--CoA ligase.